Here is a 274-residue protein sequence, read N- to C-terminus: tRNA-cytidine(32) 2-sulfurtransferase (274 aa).

The PP-loop motif motif lies at 40 to 45; the sequence is SGGKDS. [4Fe-4S] cluster-binding residues include Cys-115, Cys-118, and Cys-206.

This sequence belongs to the TtcA family. In terms of assembly, homodimer. Requires Mg(2+) as cofactor. The cofactor is [4Fe-4S] cluster.

It is found in the cytoplasm. It carries out the reaction cytidine(32) in tRNA + S-sulfanyl-L-cysteinyl-[cysteine desulfurase] + AH2 + ATP = 2-thiocytidine(32) in tRNA + L-cysteinyl-[cysteine desulfurase] + A + AMP + diphosphate + H(+). It functions in the pathway tRNA modification. In terms of biological role, catalyzes the ATP-dependent 2-thiolation of cytidine in position 32 of tRNA, to form 2-thiocytidine (s(2)C32). The sulfur atoms are provided by the cysteine/cysteine desulfurase (IscS) system. This Pseudomonas putida (strain ATCC 700007 / DSM 6899 / JCM 31910 / BCRC 17059 / LMG 24140 / F1) protein is tRNA-cytidine(32) 2-sulfurtransferase.